The primary structure comprises 527 residues: Peptide chain release factor 3 (527 aa).

The tr-type G domain maps to 9–277 (AKRRTFAIIS…AVVDWAPKPL (269 aa)). Residues 18 to 25 (SHPDAGKT), 86 to 90 (DTPGH), and 140 to 143 (NKLD) each bind GTP.

This sequence belongs to the TRAFAC class translation factor GTPase superfamily. Classic translation factor GTPase family. PrfC subfamily.

It localises to the cytoplasm. Increases the formation of ribosomal termination complexes and stimulates activities of RF-1 and RF-2. It binds guanine nucleotides and has strong preference for UGA stop codons. It may interact directly with the ribosome. The stimulation of RF-1 and RF-2 is significantly reduced by GTP and GDP, but not by GMP. In Stutzerimonas stutzeri (strain A1501) (Pseudomonas stutzeri), this protein is Peptide chain release factor 3.